Reading from the N-terminus, the 35-residue chain is Mu/omega-theraphotoxin-Tap1a (35 aa).

Cystine bridges form between Cys3–Cys18, Cys10–Cys23, and Cys17–Cys30.

It belongs to the neurotoxin 10 (Hwtx-1) family. 59 (Tltx) subfamily. As to expression, expressed by the venom gland.

Its subcellular location is the secreted. In terms of biological role, gating-modifier toxin that inhibits both sodium (Nav) and calcium (Cav3) channels by inducing hyperpolarizing shift in voltage-dependence of activation and steady state inactivation. Inhibits Nav1.1/SCN1A, Nav1.2/SCN2A, Nav1.3/SCN3A, Nav1.6/SCN6A, Nav1.7/SCN9A and Cav3.1/CACNA1G sodium and calcium channels at nanomolar concentrations (IC(50)=81-301 nM). Surprisingly, selectively slows fast inactivation of Nav1.3/SCN3A. Also shows moderate inhibition of Cav3.2/CACNA1H calcium channels (IC(50)=1233 nM). Ex vivo, nearly ablates neuronal mechanosensitivity in afferent fibers innervating the colon and the bladder. In vivo, in a mouse model of irritable bowel syndrome, intracolonic administration of the toxin reverses colonic mechanical hypersensitivity. The chain is Mu/omega-theraphotoxin-Tap1a from Theraphosa apophysis (Goliath pinkfoot tarantula).